A 1038-amino-acid polypeptide reads, in one-letter code: Rap guanine nucleotide exchange factor 1 (1038 aa).

Arginine 10–aspartate 140 contributes to the a nucleoside 3',5'-cyclic phosphate binding site. Residues threonine 234–glutamine 316 enclose the DEP domain. Residue alanine 375 to valine 492 coordinates a nucleoside 3',5'-cyclic phosphate. One can recognise an N-terminal Ras-GEF domain in the interval cysteine 516–arginine 654. The region spanning aspartate 795–lysine 1028 is the Ras-GEF domain.

Interacts (via C-terminus) with drn-1. Expressed specifically in neurons including the nerve ring, ventral and dorsal nerve cord motor neurons and tail ganglia.

Functionally, guanine nucleotide-releasing protein. Together with GTPase drn-1, may regulate acetylcholine release at the neuromuscular junctions probably downstream of G-protein gsa-1 and adenylate cyclase acy-1. This chain is Rap guanine nucleotide exchange factor 1 (epac-1), found in Caenorhabditis elegans.